The sequence spans 801 residues: Mitochondrial intermediate peptidase (801 aa).

The N-terminal 41 residues, 1–41 (MKDQLLVPLRRRPWTCQKCLQRLQLPRHQTRRSFETAASPF), are a transit peptide targeting the mitochondrion. Zn(2+) is bound at residue His564. Glu565 is a catalytic residue. Zn(2+) is bound by residues His568 and His571.

Belongs to the peptidase M3 family. It depends on Zn(2+) as a cofactor.

Its subcellular location is the mitochondrion matrix. It catalyses the reaction Release of an N-terminal octapeptide as second stage of processing of some proteins imported into the mitochondrion.. Cleaves proteins, imported into the mitochondrion, to their mature size. While most mitochondrial precursor proteins are processed to the mature form in one step by mitochondrial processing peptidase (MPP), the sequential cleavage by MIP of an octapeptide after initial processing by MPP is a required step for a subgroup of nuclear-encoded precursor proteins destined for the matrix or the inner membrane. The polypeptide is Mitochondrial intermediate peptidase (oct1) (Aspergillus fumigatus (strain CBS 144.89 / FGSC A1163 / CEA10) (Neosartorya fumigata)).